Here is a 743-residue protein sequence, read N- to C-terminus: Sulfhydryl oxidase 1 (743 aa).

An N-terminal signal peptide occupies residues 1-42; that stretch reads MWRRRARSGGGGGGGGGGAAPRCRWWPAVLALLAAALPAARS. Residues 43-166 enclose the Thioredoxin domain; that stretch reads RSLYSPSDPL…LRRAIITNLE (124 aa). Residues cysteine 80 and cysteine 83 each act as nucleophile in the active site. Cystine bridges form between cysteine 80/cysteine 83 and cysteine 111/cysteine 120. 5 N-linked (GlcNAc...) asparagine glycosylation sites follow: asparagine 254, asparagine 288, asparagine 295, asparagine 371, and asparagine 401. An intrachain disulfide couples cysteine 407 to cysteine 419. One can recognise an ERV/ALR sulfhydryl oxidase domain in the interval 410 to 513; sequence SEPHFRGYPC…EDPQFPKLQW (104 aa). Residues arginine 415, tryptophan 422, histidine 426, glutamate 461, histidine 465, 488 to 495, lysine 510, and tryptophan 513 contribute to the FAD site; that span reads WSHHNEVN. Cysteine 459 and cysteine 462 are joined by a disulfide. A disulfide bridge connects residues cysteine 519 and cysteine 522. The segment at 567 to 617 is disordered; the sequence is ASARLSTAGLREKEEEERKEEEEEGEKETEKPHREGETGRPGSSELRRPSI. The segment covering 580 to 593 has biased composition (acidic residues); the sequence is EEEERKEEEEEGEK. Residues 594–604 are compositionally biased toward basic and acidic residues; it reads ETEKPHREGET. The helical transmembrane segment at 707–727 threads the bilayer; sequence SLCIALYFLSSMCLLGMYTFF.

Belongs to the quiescin-sulfhydryl oxidase (QSOX) family. It depends on FAD as a cofactor. N-glycosylated. O-glycosylated on Thr and Ser residues.

It localises to the golgi apparatus membrane. It is found in the secreted. It catalyses the reaction 2 R'C(R)SH + O2 = R'C(R)S-S(R)CR' + H2O2. Catalyzes the oxidation of sulfhydryl groups in peptide and protein thiols to disulfides with the reduction of oxygen to hydrogen peroxide. Plays a role in disulfide bond formation in a variety of extracellular proteins. In fibroblasts, required for normal incorporation of laminin into the extracellular matrix, and thereby for normal cell-cell adhesion and cell migration. This is Sulfhydryl oxidase 1 (QSOX1) from Gallus gallus (Chicken).